The chain runs to 319 residues: tRNA uridine(34) hydroxylase (319 aa).

Positions 133–231 constitute a Rhodanese domain; the sequence is EDPDSVVIDT…YLEDVSSENS (99 aa). The Cysteine persulfide intermediate role is filled by C191.

Belongs to the TrhO family.

It carries out the reaction uridine(34) in tRNA + AH2 + O2 = 5-hydroxyuridine(34) in tRNA + A + H2O. In terms of biological role, catalyzes oxygen-dependent 5-hydroxyuridine (ho5U) modification at position 34 in tRNAs. This chain is tRNA uridine(34) hydroxylase, found in Prochlorococcus marinus (strain NATL1A).